Here is a 300-residue protein sequence, read N- to C-terminus: 2-keto-3-deoxy-L-fuconate dehydrogenase (300 aa).

Residues 63–90 (LITAAGAGIGRESALACARAGAHVIATD) and Asp112 each bind NAD(+). Arg198 provides a ligand contact to substrate. Catalysis depends on Tyr201, which acts as the Proton acceptor. Residues Lys205 and 234–238 (IKTPS) each bind NAD(+). Arg242 and Arg260 together coordinate substrate.

Belongs to the short-chain dehydrogenases/reductases (SDR) family.

Functionally, plays a role in the catabolism of L-fucose. Catalyzes the NAD(+)-dependent oxidation of 2-keo-3-deoxy-L-fuconate to 2,4-diketo-3-deoxy-L-fuconate. The sequence is that of 2-keto-3-deoxy-L-fuconate dehydrogenase from Xanthomonas campestris pv. campestris (strain ATCC 33913 / DSM 3586 / NCPPB 528 / LMG 568 / P 25).